A 104-amino-acid chain; its full sequence is Thioredoxin-2 (104 aa).

Positions 2-104 (VTQLKSASEY…AIKQAIASNV (103 aa)) constitute a Thioredoxin domain. Catalysis depends on nucleophile residues cysteine 31 and cysteine 34. Residues cysteine 31 and cysteine 34 are joined by a disulfide bond. Position 62 is a phosphoserine (serine 62). Residues lysine 67 and lysine 97 each participate in a glycyl lysine isopeptide (Lys-Gly) (interchain with G-Cter in ubiquitin) cross-link.

The protein belongs to the thioredoxin family. Monomer. Part of the heterodimeric LMA1 complex together with the proteinase inhibitor PBI2. LMA1 binds to the ATPase SEC18. Reversible disulfide bond formation between Cys-31 and Cys-34, reverted by thioredoxin reductase TRR1 using NADPH as hydrogen donor.

The protein resides in the cytoplasm. It is found in the golgi apparatus membrane. It localises to the nucleus. Its function is as follows. Participates as a hydrogen donor in redox reactions through the reversible oxidation of its active center dithiol to a disulfide, accompanied by the transfer of 2 electrons and 2 protons. It is involved in many cellular processes, including deoxyribonucleotide synthesis, repair of oxidatively damaged proteins, protein folding, sulfur metabolism, and redox homeostasis. Thioredoxin-dependent enzymes include phosphoadenosine-phosphosulfate reductase MET16, alkyl-hydroperoxide reductase DOT5, thioredoxin peroxidases TSA1 and TSA2, alkyl hydroperoxide reductase AHP1, and peroxiredoxin HYR1. Thioredoxin is also involved in protection against reducing stress. As part of the LMA1 complex, it is involved in the facilitation of vesicle fusion such as homotypic vacuole and ER-derived COPII vesicle fusion with the Golgi. This activity does not require the redox mechanism. Through its capacity to inactivate the stress response transcription factor YAP1 and its regulator the hydroperoxide stress sensor HYR1, it is involved in feedback regulation of stress response gene expression upon oxidative stress. This is Thioredoxin-2 (TRX2) from Saccharomyces cerevisiae (strain ATCC 204508 / S288c) (Baker's yeast).